The sequence spans 938 residues: Isoleucine--tRNA ligase (938 aa).

A 'HIGH' region motif is present at residues Pro58–His68. Residue Lys183 is modified to N6-acetyllysine. An L-isoleucyl-5'-AMP-binding site is contributed by Glu561. The 'KMSKS' region motif lies at Lys602–Ser606. Lys605 contributes to the ATP binding site. Zn(2+)-binding residues include Cys901, Cys904, Cys921, and Cys924.

The protein belongs to the class-I aminoacyl-tRNA synthetase family. IleS type 1 subfamily. As to quaternary structure, monomer. Zn(2+) serves as cofactor.

The protein resides in the cytoplasm. The catalysed reaction is tRNA(Ile) + L-isoleucine + ATP = L-isoleucyl-tRNA(Ile) + AMP + diphosphate. In terms of biological role, catalyzes the attachment of isoleucine to tRNA(Ile). As IleRS can inadvertently accommodate and process structurally similar amino acids such as valine, to avoid such errors it has two additional distinct tRNA(Ile)-dependent editing activities. One activity is designated as 'pretransfer' editing and involves the hydrolysis of activated Val-AMP. The other activity is designated 'posttransfer' editing and involves deacylation of mischarged Val-tRNA(Ile). This chain is Isoleucine--tRNA ligase, found in Escherichia coli O6:K15:H31 (strain 536 / UPEC).